The sequence spans 569 residues: Proline--tRNA ligase (569 aa).

Belongs to the class-II aminoacyl-tRNA synthetase family. ProS type 1 subfamily. Homodimer.

The protein resides in the cytoplasm. It catalyses the reaction tRNA(Pro) + L-proline + ATP = L-prolyl-tRNA(Pro) + AMP + diphosphate. Functionally, catalyzes the attachment of proline to tRNA(Pro) in a two-step reaction: proline is first activated by ATP to form Pro-AMP and then transferred to the acceptor end of tRNA(Pro). As ProRS can inadvertently accommodate and process non-cognate amino acids such as alanine and cysteine, to avoid such errors it has two additional distinct editing activities against alanine. One activity is designated as 'pretransfer' editing and involves the tRNA(Pro)-independent hydrolysis of activated Ala-AMP. The other activity is designated 'posttransfer' editing and involves deacylation of mischarged Ala-tRNA(Pro). The misacylated Cys-tRNA(Pro) is not edited by ProRS. The sequence is that of Proline--tRNA ligase from Shewanella loihica (strain ATCC BAA-1088 / PV-4).